The primary structure comprises 260 residues: Serine protease VLSP-1 (260 aa).

An N-terminal signal peptide occupies residues 1–18 (MVLIRVLANLLVLHLSYA). Positions 19 to 24 (QKSSEL) are excised as a propeptide. The Peptidase S1 domain maps to 25-251 (VIGGDECNIN…YSDWIQSIIA (227 aa)). Disulfide bonds link Cys-31/Cys-165, Cys-52/Cys-68, Cys-100/Cys-258, Cys-144/Cys-212, Cys-176/Cys-191, and Cys-202/Cys-227. Asn-44 is a glycosylation site (N-linked (GlcNAc...) asparagine). The active-site Charge relay system is His-67. The N-linked (GlcNAc...) asparagine glycan is linked to Asn-103. Asp-112 (charge relay system) is an active-site residue. A glycan (N-linked (GlcNAc...) asparagine) is linked at Asn-156. Ser-206 functions as the Charge relay system in the catalytic mechanism.

It belongs to the peptidase S1 family. Snake venom subfamily. Expressed by the venom gland.

Its subcellular location is the secreted. In terms of biological role, snake venom serine protease that may act in the hemostasis system of the prey. This Macrovipera lebetinus (Levantine viper) protein is Serine protease VLSP-1.